The sequence spans 485 residues: MNSVLALIAGAILPLAFAPFNWFPIAFVSPAILLAVWLRSRPLVAWWRGWLFGFGFFGAGASWVYVSIHHFGNANVPLAVLITVLFVFVLALFIAFQGLSFSLFFRKRKAALTALFAFPAWWVVWEWLRSILFTGFPWLFLGYSQINSPLKGFGPLFGIYGISLIVAFISGCIYLLVTSKKLNKKIMCLILIILPFIVGWVLTFIPWTRPGSESVRVGLVQGNIGQRLKWDPDTLYSTLHTYYSETQKNWDHGIIVWPEAAIPIYPQQVSVFLQALDKEAKQHNTALMTGIPIYHEKTNKVFNGLMVLGDGHGLYLKRHLVPFGESFTSSKICNLLMKYFDIPMSDLSPGPEDQEPTVVKGIPFAPFICYEIAYPTEVLNHLSNKQFIVVVNDDSWFAGTIAPAQQLQIAQMRALETERYLLYSTNTGITAIISPEGKIVKSAPQNQRLLLTGQIKPVTGKTPLMRWNYYPVVGIIIIFLLLTFL.

Helical transmembrane passes span 8–28 (IAGA…IAFV), 49–69 (GWLF…VSIH), 76–96 (VPLA…FIAF), 121–141 (WWVV…WLFL), 157–177 (FGIY…YLLV), and 186–206 (IMCL…TFIP). One can recognise a CN hydrolase domain in the interval 220-457 (VQGNIGQRLK…RLLLTGQIKP (238 aa)). Glutamate 259 serves as the catalytic Proton acceptor. Lysine 317 is a catalytic residue. Cysteine 369 acts as the Nucleophile in catalysis. Residues 464-484 (LMRWNYYPVVGIIIIFLLLTF) form a helical membrane-spanning segment.

It belongs to the CN hydrolase family. Apolipoprotein N-acyltransferase subfamily.

It localises to the cell inner membrane. The catalysed reaction is N-terminal S-1,2-diacyl-sn-glyceryl-L-cysteinyl-[lipoprotein] + a glycerophospholipid = N-acyl-S-1,2-diacyl-sn-glyceryl-L-cysteinyl-[lipoprotein] + a 2-acyl-sn-glycero-3-phospholipid + H(+). Its pathway is protein modification; lipoprotein biosynthesis (N-acyl transfer). In terms of biological role, catalyzes the phospholipid dependent N-acylation of the N-terminal cysteine of apolipoprotein, the last step in lipoprotein maturation. This Coxiella burnetii (strain RSA 493 / Nine Mile phase I) protein is Apolipoprotein N-acyltransferase.